Reading from the N-terminus, the 203-residue chain is MTQDQTAEQMPAAESADQSADQGPAAESAAPPAVDSERIKELEAEIAKLKNDVLYAKAETENTRRRLEQQAEDRGRYAISNIAKDVLSVADNLRRALDSVPASAREGNESLTALTTGVEMTERELLATFERYGIKLVAAQGERFDPNLHQAMMEMEDPSQIEGTVVLVMQAGYTLHDRLLRPALVGVAKGGPKSGGNNVDTKV.

The interval 1–38 (MTQDQTAEQMPAAESADQSADQGPAAESAAPPAVDSER) is disordered.

This sequence belongs to the GrpE family. Homodimer.

The protein resides in the cytoplasm. Functionally, participates actively in the response to hyperosmotic and heat shock by preventing the aggregation of stress-denatured proteins, in association with DnaK and GrpE. It is the nucleotide exchange factor for DnaK and may function as a thermosensor. Unfolded proteins bind initially to DnaJ; upon interaction with the DnaJ-bound protein, DnaK hydrolyzes its bound ATP, resulting in the formation of a stable complex. GrpE releases ADP from DnaK; ATP binding to DnaK triggers the release of the substrate protein, thus completing the reaction cycle. Several rounds of ATP-dependent interactions between DnaJ, DnaK and GrpE are required for fully efficient folding. The chain is Protein GrpE from Paramagnetospirillum magneticum (strain ATCC 700264 / AMB-1) (Magnetospirillum magneticum).